Reading from the N-terminus, the 129-residue chain is Small ribosomal subunit protein uS8 (129 aa).

Belongs to the universal ribosomal protein uS8 family. Part of the 30S ribosomal subunit. Contacts proteins S5 and S12.

Its function is as follows. One of the primary rRNA binding proteins, it binds directly to 16S rRNA central domain where it helps coordinate assembly of the platform of the 30S subunit. The protein is Small ribosomal subunit protein uS8 of Bdellovibrio bacteriovorus (strain ATCC 15356 / DSM 50701 / NCIMB 9529 / HD100).